The chain runs to 531 residues: MKRKVAVIGAGVSGLAAIRSCLEEGLEPTCFERSDDVGGLWKFSDHTEEGRASIYQSVFTNSSKEMMCFPDFPYPDDFPNFMHNSKLQEYITSFATEKNLLKYIQFETLVTRINKCPDFSTTGKWEVTTEKNSKKETAVFDAVMICSGHHVYPHLPKDSFPGLNRFKGKCFHSRDYKEPGTWKGKRVLVIGLGNSGCDIAAELSHVAQQVIISSRSGSWVMSRVWNDGYPWDMVVITRFQTFLKNNLPTAISDWWYMKQMNARFKHENYGLMPLNGTLRKEPVFNDELPARILCGTVSIKPNVKEFTETSAVFEDGTVFEGIDCVIFATGYGYAYPFLDDSIIKSRNNEVTLYKGIFPPQLEKPTMAVIGLVQSLGAAIPTTDLQARWAAQVIRGTCILPSVNDMMDDIDEKMGKKLKWFGNSTTIQTDYIVYMDELASFIGAKPNILWLFLKDPRLAIEVFFGPCSPYQFRLVGPGKWSGARNAILTQWDRSLKPMKTRVVGGIQKPCLYSHFLRLLAVPVLIALFLVLI.

FAD contacts are provided by residues Gly-9–Ser-13, Glu-32, Leu-40–Trp-41, and Asn-61–Ser-62. NADP(+)-binding positions include Thr-60–Asn-61 and Ser-195–Asp-198. Ser-401 is modified (phosphoserine). The helical transmembrane segment at Tyr-511–Ile-531 threads the bilayer.

This sequence belongs to the FMO family. It depends on FAD as a cofactor. In terms of tissue distribution, detected in liver and kidney (at protein level). Expressed in kidney and liver. Weakly expressed in lung. Does not seem to be expressed in brain, adipose tissue, or muscle.

It localises to the microsome membrane. The protein localises to the endoplasmic reticulum membrane. It carries out the reaction trimethylamine + NADPH + O2 = trimethylamine N-oxide + NADP(+) + H2O. It catalyses the reaction N,N-dimethylaniline + NADPH + O2 + H(+) = N,N-dimethylaniline N-oxide + NADP(+) + H2O. The catalysed reaction is hypotaurine + NADPH + O2 + H(+) = taurine + NADP(+) + H2O. The enzyme catalyses (S)-nicotine + NADPH + O2 = trans-(S)-nicotine N(1')-oxide + NADP(+) + H2O. It carries out the reaction albendazole + NADPH + O2 + H(+) = albendazole S-oxide + NADP(+) + H2O. Essential hepatic enzyme that catalyzes the oxygenation of a wide variety of nitrogen- and sulfur-containing compounds including drugs as well as dietary compounds. Plays an important role in the metabolism of trimethylamine (TMA), via the production of trimethylamine N-oxide (TMAO) metabolite. TMA is generated by the action of gut microbiota using dietary precursors such as choline, choline containing compounds, betaine or L-carnitine. By regulating TMAO concentration, FMO3 directly impacts both platelet responsiveness and rate of thrombus formation. The chain is Flavin-containing monooxygenase 3 (Fmo3) from Rattus norvegicus (Rat).